A 680-amino-acid polypeptide reads, in one-letter code: Leucine-rich repeat protein soc-2 homolog (680 aa).

Residues 1–19 (MNLCSSGATASTTSLSSTG) are compositionally biased toward low complexity. 2 disordered regions span residues 1–54 (MNLC…SDVS) and 73–149 (TGTE…PIQA). The span at 26-49 (GVPGGGAEGGGGGGGSGNSGGGGK) shows a compositional bias: gly residues. Residues 73–86 (TGTEELSNANSPAN) show a composition bias toward low complexity. A compositionally biased stretch (gly residues) spans 87–96 (GAGGASGSTG). A compositionally biased stretch (low complexity) spans 97-106 (SGQQPTGSNG). LRR repeat units lie at residues 161–182 (RIKR…VKEC), 184–205 (HLTE…IGCL), 207–228 (SLRN…LQNC), 230–251 (QLKV…IYRL), 253–274 (SLTT…LRQL), 276–297 (NLTM…IGAL), 299–320 (NLTT…IGNC), 322–343 (NLSA…IGNL), 345–367 (SLVR…KNCK), 368–389 (SMDE…MLAS), 392–413 (GLTT…GPAQ), 416–437 (NVYS…IFSR), 440–461 (GLTK…IGTW), 463–484 (NMVE…IMNL), 486–507 (NLEI…IGNL), 509–530 (RLRI…IGLL), 532–553 (ELQR…IGHL), 555–576 (NLTH…IGSL), 578–600 (SLEN…LALC), and 602–623 (NLKY…IQAG). Gly residues predominate over residues 658–668 (AGGNGGGGAAA). The disordered stretch occupies residues 658-680 (AGGNGGGGAAAAGGSASRSSDRR). Residues 669-680 (AGGSASRSSDRR) are compositionally biased toward low complexity.

Belongs to the SHOC2 family.

In terms of biological role, acts as a Ras effector and participates in MAPK pathway activation. Probably acts as a regulatory subunit of protein phosphatase that specifically dephosphorylates Raf kinase and stimulate Raf activity at specialized signaling complexes upon Ras activation. The chain is Leucine-rich repeat protein soc-2 homolog (Sur-8) from Drosophila simulans (Fruit fly).